Reading from the N-terminus, the 242-residue chain is 7-cyano-7-deazaguanine synthase (242 aa).

Position 12–22 (12–22 (FSGGQDSTTCL)) interacts with ATP. Zn(2+) is bound by residues Cys200, Cys215, Cys218, and Cys221.

The protein belongs to the QueC family. Zn(2+) is required as a cofactor.

It carries out the reaction 7-carboxy-7-deazaguanine + NH4(+) + ATP = 7-cyano-7-deazaguanine + ADP + phosphate + H2O + H(+). Its pathway is purine metabolism; 7-cyano-7-deazaguanine biosynthesis. In terms of biological role, catalyzes the ATP-dependent conversion of 7-carboxy-7-deazaguanine (CDG) to 7-cyano-7-deazaguanine (preQ(0)). This Nitratidesulfovibrio vulgaris (strain ATCC 29579 / DSM 644 / CCUG 34227 / NCIMB 8303 / VKM B-1760 / Hildenborough) (Desulfovibrio vulgaris) protein is 7-cyano-7-deazaguanine synthase.